We begin with the raw amino-acid sequence, 119 residues long: Phenol 2-monooxygenase, oxygenase component DmpO (119 aa).

The multicomponent enzyme phenol hydroxylase is formed by DmpL (P1 component), DmpM (P2 component), DmpN (P3 component), DmpO (P4 component) and DmpP (P5 component). The oxygenase component is a dimer composed of three subunits, DmpL, DmpN and DmpO (DmpLNO).

The enzyme catalyses phenol + NADH + O2 + H(+) = catechol + NAD(+) + H2O. Its pathway is aromatic compound metabolism; phenol degradation. Requires DmpM for efficient turnover. The activity of DmpLNO oxygenase is inhibited by dithiothreitol (DTT) by a mechanism apparently involving H(2)O(2) generation. Part of a multicomponent enzyme which catalyzes the degradation of phenol and some of its methylated derivatives. DmpL, DmpN and DmpO form the oxygenase component of the complex. Required for growth on phenol and for in vitro phenol hydroxylase activity. This is Phenol 2-monooxygenase, oxygenase component DmpO from Pseudomonas sp. (strain CF600).